The chain runs to 307 residues: MTNDALIAALSHLVSEGRNPDTMDIDLLSSQEIVERLNQQDKQVPLAVEAVLPQIAQAVDKITAAFKQGGRLIYLGAGTSGRLGVLDASECPPTFGVSDQMVIGLIAGGKEAMFTAQEGAEDNATLGAHDLQQIDFSSKDVLVGIAASGRTPYVIGALEYANDLGATTIALSCNPDSPIAEIAQIAISPVVGPEALTGSTRLKSGTAQKLVLNMLTTASMIRLGKSYQNLMVDVRATNRKLIARAVRIVMQATDCQREEAEALLKESHNNAKLAILMHLTGMNYEQATAKLSQSDGFLRRAMEEHEE.

One can recognise an SIS domain in the interval 62–225 (ITAAFKQGGR…TTASMIRLGK (164 aa)). Glutamate 90 serves as the catalytic Proton donor. Glutamate 121 is an active-site residue.

This sequence belongs to the GCKR-like family. MurNAc-6-P etherase subfamily. Homodimer.

The catalysed reaction is N-acetyl-D-muramate 6-phosphate + H2O = N-acetyl-D-glucosamine 6-phosphate + (R)-lactate. It functions in the pathway amino-sugar metabolism; 1,6-anhydro-N-acetylmuramate degradation. It participates in amino-sugar metabolism; N-acetylmuramate degradation. The protein operates within cell wall biogenesis; peptidoglycan recycling. Functionally, specifically catalyzes the cleavage of the D-lactyl ether substituent of MurNAc 6-phosphate, producing GlcNAc 6-phosphate and D-lactate. Together with AnmK, is also required for the utilization of anhydro-N-acetylmuramic acid (anhMurNAc) either imported from the medium or derived from its own cell wall murein, and thus plays a role in cell wall recycling. This is N-acetylmuramic acid 6-phosphate etherase 2 from Vibrio cholerae serotype O1 (strain ATCC 39315 / El Tor Inaba N16961).